The sequence spans 517 residues: GMP synthase [glutamine-hydrolyzing] (517 aa).

The region spanning Arg-9–Leu-199 is the Glutamine amidotransferase type-1 domain. The active-site Nucleophile is the Cys-86. Active-site residues include His-173 and Glu-175. Residues Trp-200–Arg-392 form the GMPS ATP-PPase domain. Ser-227 to Ser-233 serves as a coordination point for ATP.

In terms of assembly, homodimer.

It catalyses the reaction XMP + L-glutamine + ATP + H2O = GMP + L-glutamate + AMP + diphosphate + 2 H(+). It functions in the pathway purine metabolism; GMP biosynthesis; GMP from XMP (L-Gln route): step 1/1. Functionally, catalyzes the synthesis of GMP from XMP. This chain is GMP synthase [glutamine-hydrolyzing], found in Vibrio atlanticus (strain LGP32) (Vibrio splendidus (strain Mel32)).